Here is a 213-residue protein sequence, read N- to C-terminus: Large ribosomal subunit protein uL3 (213 aa).

It belongs to the universal ribosomal protein uL3 family. Part of the 50S ribosomal subunit. Forms a cluster with proteins L14 and L19.

Its function is as follows. One of the primary rRNA binding proteins, it binds directly near the 3'-end of the 23S rRNA, where it nucleates assembly of the 50S subunit. This chain is Large ribosomal subunit protein uL3, found in Bifidobacterium longum subsp. infantis (strain ATCC 15697 / DSM 20088 / JCM 1222 / NCTC 11817 / S12).